The sequence spans 422 residues: MSLTQGMKAKQLLAYFQGKADQDAREAKARGELVCWSASVAPPEFCVTMGIAMIYPETHAAGIGARKGAMDMLEVADRKGYNVDCCSYGRVNMGYMECLKEAAITGVKPEVLVNSPAADVPLPDLVITCNNICNTLLKWYENLAAELDIPCIVIDVPFNHTMPIPEYAKAYIADQFRNAISQLEVICGRPFDWKKFKEVKDQTQRSVYHWNRIAEMAKYKPSPLNGFDLFNYMALIVACRSLDYAEITFKAFADELEENLKAGIYAFKGAEKTRFQWEGIAVWPHLGHTFKSMKNLNSIMTGTAYPALWDLHYDANDESMHSMAEAYTRIYINTCLQNKVEVLLGIMEKGQVDGTVYHLNRSCKLMSFLNVETAEIIKEKNGLPYVSIDGDQTDPRVFSPAQFDTRVQALVEMMEANMAAAE.

The protein belongs to the FldB/FldC dehydratase alpha/beta subunit family. In terms of assembly, heterodimer of an alpha (LcdA) and a beta (LcdB) subunit. It depends on [4Fe-4S] cluster as a cofactor. Requires FMN as cofactor. Riboflavin serves as cofactor. The cofactor is Mg(2+).

The enzyme catalyses (R)-lactoyl-CoA = acryloyl-CoA + H2O. It carries out the reaction (2R)-hydroxybutanoyl-CoA = (2E)-butenoyl-CoA + H2O. Its activity is regulated as follows. Activated by the LcdC protein. Functionally, involved in the acrylate pathway for the conversion of D-lactic acid to propionic acid. Catalyzes the reversible dehydration of Lactoyl-CoA and 2-hydroxybutyroyl-CoA to acryloyl-CoA and crotonyl-CoA, respectively. The polypeptide is Lactoyl-CoA dehydratase subunit alpha (lcdA) (Anaerotignum propionicum (Clostridium propionicum)).